The chain runs to 448 residues: Probable glycine dehydrogenase (decarboxylating) subunit 1 (448 aa).

Belongs to the GcvP family. N-terminal subunit subfamily. In terms of assembly, the glycine cleavage system is composed of four proteins: P, T, L and H. In this organism, the P 'protein' is a heterodimer of two subunits.

It carries out the reaction N(6)-[(R)-lipoyl]-L-lysyl-[glycine-cleavage complex H protein] + glycine + H(+) = N(6)-[(R)-S(8)-aminomethyldihydrolipoyl]-L-lysyl-[glycine-cleavage complex H protein] + CO2. The glycine cleavage system catalyzes the degradation of glycine. The P protein binds the alpha-amino group of glycine through its pyridoxal phosphate cofactor; CO(2) is released and the remaining methylamine moiety is then transferred to the lipoamide cofactor of the H protein. In Thermomicrobium roseum (strain ATCC 27502 / DSM 5159 / P-2), this protein is Probable glycine dehydrogenase (decarboxylating) subunit 1.